Reading from the N-terminus, the 157-residue chain is Protein Smg (157 aa).

It belongs to the Smg family.

In Buchnera aphidicola subsp. Schizaphis graminum (strain Sg), this protein is Protein Smg.